Consider the following 312-residue polypeptide: Dehydrogenase/reductase SDR family member 7C (312 aa).

The first 18 residues, 1-18 (MGVMAMLMLPLLLLGISG), serve as a signal peptide directing secretion. NAD(+)-binding residues include Ser-47, Leu-49, Tyr-192, Lys-196, and Ser-227. Tyr-192 functions as the Proton acceptor in the catalytic mechanism.

It belongs to the short-chain dehydrogenases/reductases (SDR) family.

The protein localises to the sarcoplasmic reticulum membrane. The catalysed reaction is all-trans-retinol + NAD(+) = all-trans-retinal + NADH + H(+). Functionally, NADH-dependent oxidoreductase which catalyzes the oxidation of all-trans-retinol to all-trans-retinal. Plays a role in the regulation of cardiac and skeletal muscle metabolic functions. Maintains Ca(2+) intracellular homeostasis by repressing Ca(2+) release from the sarcoplasmic reticulum (SR) in myotubes, possibly through local alternations in NAD/NADH or retinol/retinal. Also plays a role in Ca(2+) homeostasis by controlling Ca(2+) overload in the cytosol and the SR in myotubes. Involved in glucose uptake into skeletal muscles and muscle performance by activating PI3K and mTORC2-mediated AKT1 phosphorylation signaling pathways, possibly through the action of its downstream catalytic product all-trans-retinoic acid. The polypeptide is Dehydrogenase/reductase SDR family member 7C (Homo sapiens (Human)).